A 121-amino-acid chain; its full sequence is MARIAGVDIPNDKRVVVSLTYVYGIGLPTSKKILAAAGVSEDVRVKDLTPDQEDAIRREVDAIKVEGDLRREVNLNIKRLMEIGSYRGIRHRRGLPVRGQNTKNNARTRKGKAVAIAGKKK.

A disordered region spans residues P96–K121. A compositionally biased stretch (basic residues) spans A106–K121.

The protein belongs to the universal ribosomal protein uS13 family. In terms of assembly, part of the 30S ribosomal subunit. Forms a loose heterodimer with protein S19. Forms two bridges to the 50S subunit in the 70S ribosome.

In terms of biological role, located at the top of the head of the 30S subunit, it contacts several helices of the 16S rRNA. In the 70S ribosome it contacts the 23S rRNA (bridge B1a) and protein L5 of the 50S subunit (bridge B1b), connecting the 2 subunits; these bridges are implicated in subunit movement. Contacts the tRNAs in the A and P-sites. The polypeptide is Small ribosomal subunit protein uS13 (Streptococcus gordonii (strain Challis / ATCC 35105 / BCRC 15272 / CH1 / DL1 / V288)).